A 321-amino-acid chain; its full sequence is Acetyl-coenzyme A carboxylase carboxyl transferase subunit alpha (321 aa).

The CoA carboxyltransferase C-terminal domain occupies 39-293 (RLEVKSQALT…KRALAEALRQ (255 aa)).

Belongs to the AccA family. In terms of assembly, acetyl-CoA carboxylase is a heterohexamer composed of biotin carboxyl carrier protein (AccB), biotin carboxylase (AccC) and two subunits each of ACCase subunit alpha (AccA) and ACCase subunit beta (AccD).

Its subcellular location is the cytoplasm. It carries out the reaction N(6)-carboxybiotinyl-L-lysyl-[protein] + acetyl-CoA = N(6)-biotinyl-L-lysyl-[protein] + malonyl-CoA. It functions in the pathway lipid metabolism; malonyl-CoA biosynthesis; malonyl-CoA from acetyl-CoA: step 1/1. In terms of biological role, component of the acetyl coenzyme A carboxylase (ACC) complex. First, biotin carboxylase catalyzes the carboxylation of biotin on its carrier protein (BCCP) and then the CO(2) group is transferred by the carboxyltransferase to acetyl-CoA to form malonyl-CoA. The sequence is that of Acetyl-coenzyme A carboxylase carboxyl transferase subunit alpha from Azoarcus sp. (strain BH72).